The chain runs to 345 residues: Tubulin-folding cofactor C (345 aa).

At M1 the chain carries N-acetylmethionine. Residues 1–10 show a composition bias toward polar residues; the sequence is MEDDGQSSVA. Residues 1-83 form a disordered region; the sequence is MEDDGQSSVA…SRLASSSTDS (83 aa). The segment covering 23 to 39 has biased composition (basic and acidic residues); it reads DMLERLSARHQARKSDS. Low complexity predominate over residues 40 to 55; that stretch reads PDSSSSSSSTLESTSS. Residues 61–73 show a composition bias toward basic and acidic residues; the sequence is SDSKRSIESRIAE. Over residues 74 to 83 the composition is skewed to low complexity; it reads SRLASSSTDS. Positions 169–318 constitute a C-CAP/cofactor C-like domain; sequence PPKLVPVRDS…NWANVDDFRW (150 aa).

Belongs to the TBCC family. In terms of assembly, supercomplex made of cofactors A to E. Cofactors A and D function by capturing and stabilizing tubulin in a quasi-native conformation. Cofactor E binds to the cofactor D-tubulin complex; interaction with cofactor C then causes the release of tubulin polypeptides that are committed to the native state. As to expression, ubiquitously expressed (at protein level). Present in leaves, roots, flowers, and stems.

Its subcellular location is the cytoplasm. Its function is as follows. Essential tubulin-folding protein involved in the final step of the tubulin folding pathway. Required for continuous microtubule cytoskeleton organization, mitotic division, cytokinesis, and to couple cell cycle progression to cell division in embryos and endosperms. Not essential for cell viability. Binds probably to the multimeric supercomplex, stimulating GTP hydrolysis by the bound beta-tubulin and the release of the alpha-/beta-tubulin heterodimer. The polypeptide is Tubulin-folding cofactor C (TFCC) (Arabidopsis thaliana (Mouse-ear cress)).